Consider the following 451-residue polypeptide: MKPDLSSLWQECLLQLQDQISLTDFSTWLRPLQADFSVQNTIVLYASNVFIKQKVDESYLAQLTKVAQELSGNAELVVQVKVGVKPEPKPAQPSALPTHHNKEENKPQTVIRSYLNPKHVFENFVEGKSNQLARAVAQKVADNPGEPSSNPLFLYGGTGLGKTHLLHAIGNGILSRNTNARVLYIHANNFMQQMVNAVRDNKMDEFKKFYRSLDALLVDDIQFFAEKEKTQEEFFHIFNNLFDTGRQIILTSDRYPKEIEKLEERLKSRFGWGLTTAIEPPELETRVAILLKKAEEKNIYLPEEVAFFIGQKLRTNVRDLEGALNRVSANAEFMGAAITIDFVRETLKDMLALQDKLVTVENIQKVVAEYYRIKVSDLKGKSRSRSIARPRQLAMALSKELTNRSLPEIGKNFGDKDHTTVLHACRKIAELREQEHSLEEDWSNLIRTLSV.

The interval 1–94 is domain I, interacts with DnaA modulators; it reads MKPDLSSLWQ…KPEPKPAQPS (94 aa). A disordered region spans residues 87 to 106; the sequence is EPKPAQPSALPTHHNKEENK. A domain II region spans residues 95–113; that stretch reads ALPTHHNKEENKPQTVIRS. Positions 114–331 are domain III, AAA+ region; the sequence is YLNPKHVFEN…GALNRVSANA (218 aa). Residues Gly-159, Gly-161, Lys-162, and Thr-163 each contribute to the ATP site. The domain IV, binds dsDNA stretch occupies residues 332-451; it reads EFMGAAITID…WSNLIRTLSV (120 aa).

Belongs to the DnaA family. In terms of assembly, oligomerizes as a right-handed, spiral filament on DNA at oriC.

Its subcellular location is the cytoplasm. Its function is as follows. Plays an essential role in the initiation and regulation of chromosomal replication. ATP-DnaA binds to the origin of replication (oriC) to initiate formation of the DNA replication initiation complex once per cell cycle. Binds the DnaA box (a 9 base pair repeat at the origin) and separates the double-stranded (ds)DNA. Forms a right-handed helical filament on oriC DNA; dsDNA binds to the exterior of the filament while single-stranded (ss)DNA is stabiized in the filament's interior. The ATP-DnaA-oriC complex binds and stabilizes one strand of the AT-rich DNA unwinding element (DUE), permitting loading of DNA polymerase. After initiation quickly degrades to an ADP-DnaA complex that is not apt for DNA replication. Binds acidic phospholipids. The protein is Chromosomal replication initiator protein DnaA of Pasteurella multocida (strain Pm70).